We begin with the raw amino-acid sequence, 626 residues long: Receptor-like protein 4 (626 aa).

Residues 1–22 form the signal peptide; it reads MMLRFILASLLLSSFSLYSSLA. Topologically, residues 23–549 are extracellular; sequence RPAPYALRIS…CGPHLSSGAK (527 aa). 4 N-linked (GlcNAc...) asparagine glycosylation sites follow: asparagine 61, asparagine 282, asparagine 333, and asparagine 417. LRR repeat units follow at residues 420-444, 445-468, 470-492, and 493-516; these read RWFI…ISKL, KHLQ…LGSV, SLEV…LGEL, and TSLR…VGGR. Asparagine 451 and asparagine 482 each carry an N-linked (GlcNAc...) asparagine glycan. N-linked (GlcNAc...) asparagine glycosylation occurs at asparagine 524. The helical transmembrane segment at 550 to 570 threads the bilayer; the sequence is IGIAFGVSLAFLLIVACAMIW. At 571-626 the chain is on the cytoplasmic side; it reads WKRRQNILRAQQIAARGAPYAKKRTHVSHDIQMSRHGHNNHGQARTAVENGPSLLS. The interval 603-626 is disordered; sequence MSRHGHNNHGQARTAVENGPSLLS.

Belongs to the RLP family.

The protein resides in the cell membrane. The chain is Receptor-like protein 4 from Arabidopsis thaliana (Mouse-ear cress).